A 241-amino-acid chain; its full sequence is Outer membrane protein A (241 aa).

The next 5 membrane-spanning stretches (beta stranded) occupy residues 1-8 (LTAKLSYP), 13-21 (LDIYTRLGG), 46-55 (PVFAGGVEYA), 60-67 (IATRLEYQ), and 86-94 (MLSVGVSYR). A run of 4 repeats spans residues 105 to 106 (AP), 107 to 108 (AP), 109 to 110 (AP), and 111 to 112 (AP). Positions 105 to 112 (APAPAPAP) are 4 X 2 AA tandem repeats of A-P. Positions 114 to 241 (VQTKHFTLKS…RRVEIEVKGV (128 aa)) constitute an OmpA-like domain. A disulfide bond links C215 and C227.

This sequence belongs to the outer membrane OOP (TC 1.B.6) superfamily. OmpA family. Monomer and homodimer.

The protein resides in the cell outer membrane. In terms of biological role, with TolR probably plays a role in maintaining the position of the peptidoglycan cell wall in the periplasm. Acts as a porin with low permeability that allows slow penetration of small solutes; an internal gate slows down solute passage. The chain is Outer membrane protein A from Shimwellia blattae (Escherichia blattae).